Here is a 253-residue protein sequence, read N- to C-terminus: MEKNTAASGQLMTSSAEATPSSPKRPAGRTKFQETRHLVFRGVRWRGCAGRWVCKVRVPGSRGDRFWIGTSDTAEETARTHDAAMLALCGASASLNFADSAWLLHVPRAPVVSGLRPPAARCATRCLQGHRRVPAPGRGSTATATATSGDAASTAPPSAPVLSAKQCEFIFLSSLDCWMLMSKLISSSRAKGSLCLRKNPISFCMVTNSYTALLLEYIILQMNSMIVLIHELSKYQVFLLLTMITHHLFQWRR.

The span at 1–22 shows a compositional bias: polar residues; that stretch reads MEKNTAASGQLMTSSAEATPSS. Residues 1–31 are disordered; sequence MEKNTAASGQLMTSSAEATPSSPKRPAGRTK. A DNA-binding region (AP2/ERF) is located at residues 39–98; sequence VFRGVRWRGCAGRWVCKVRVPGSRGDRFWIGTSDTAEETARTHDAAMLALCGASASLNFA. Residues 131-153 form a disordered region; it reads RRVPAPGRGSTATATATSGDAAS. A compositionally biased stretch (low complexity) spans 134-153; sequence PAPGRGSTATATATSGDAAS.

This sequence belongs to the AP2/ERF transcription factor family. ERF subfamily.

Its subcellular location is the nucleus. Functionally, transcriptional activator that binds specifically to the DNA sequence 5'-[AG]CCGAC-3'. Binding to the C-repeat/DRE element mediates high salinity- and dehydration-inducible transcription. The chain is Dehydration-responsive element-binding protein 1D (DREB1D) from Oryza sativa subsp. indica (Rice).